We begin with the raw amino-acid sequence, 332 residues long: Adenosine receptor A2b (332 aa).

Topologically, residues 1–8 (MLLETQDA) are extracellular. A helical membrane pass occupies residues 9-33 (LYVALELVIAALSVAGNVLVCAAVG). Over 34 to 43 (TANTLQTPTN) the chain is Cytoplasmic. The chain crosses the membrane as a helical span at residues 44–67 (YFLVSLAAADVAVGLFAIPFAITI). The Extracellular segment spans residues 68 to 78 (SLGFCTDFYGC). Cysteines 78 and 171 form a disulfide. The chain crosses the membrane as a helical span at residues 79-101 (LFLACFVLVLTQSSIFSLLAVAV). Residues 102-121 (DRYLAICVPLRYKSLVTGTR) are Cytoplasmic-facing. Residues 122–144 (ARGVIAVLWVLAFGIGLTPFLGW) form a helical membrane-spanning segment. Residues 145–178 (NSKDSATNNCTEPWDGTTNESCCLVKCLFENVVP) are Extracellular-facing. N153 and N163 each carry an N-linked (GlcNAc...) asparagine glycan. E174 contacts adenosine. Residues 179–203 (MSYMVYFNFFGCVLPPLLIMLVIYI) traverse the membrane as a helical segment. At 204–235 (KIFLVACRQLQRTELMDHSRTTLQREIHAAKS) the chain is on the cytoplasmic side. The helical transmembrane segment at 236 to 259 (LAMIVGIFALCWLPVHAVNCVTLF) threads the bilayer. An adenosine-binding site is contributed by N254. Residues 260-267 (QPAQGKNK) lie on the Extracellular side of the membrane. The helical transmembrane segment at 268–291 (PKWAMNMAILLSHANSVVNPIVYA) threads the bilayer. Adenosine-binding residues include S279 and H280. Residues 292-332 (YRNRDFRYTFHKIISRYLLCQADVKSGNGQAGVQPALGVGL) lie on the Cytoplasmic side of the membrane. C311 carries S-palmitoyl cysteine lipidation.

The protein belongs to the G-protein coupled receptor 1 family.

The protein resides in the cell membrane. Its function is as follows. Receptor for adenosine. The activity of this receptor is mediated by G proteins which activate adenylyl cyclase. The sequence is that of Adenosine receptor A2b (ADORA2B) from Homo sapiens (Human).